The primary structure comprises 201 residues: Large ribosomal subunit protein uL4 (201 aa).

The tract at residues 44–68 (RAQKSRAEVSGSGRKPWRQKGTGRA) is disordered.

This sequence belongs to the universal ribosomal protein uL4 family. In terms of assembly, part of the 50S ribosomal subunit.

In terms of biological role, one of the primary rRNA binding proteins, this protein initially binds near the 5'-end of the 23S rRNA. It is important during the early stages of 50S assembly. It makes multiple contacts with different domains of the 23S rRNA in the assembled 50S subunit and ribosome. Functionally, forms part of the polypeptide exit tunnel. The polypeptide is Large ribosomal subunit protein uL4 (Buchnera aphidicola subsp. Acyrthosiphon pisum (strain 5A)).